The primary structure comprises 326 residues: N-acetyl-gamma-glutamyl-phosphate reductase (326 aa).

Cys-155 is a catalytic residue.

It belongs to the NAGSA dehydrogenase family. Type 1 subfamily.

It is found in the cytoplasm. The catalysed reaction is N-acetyl-L-glutamate 5-semialdehyde + phosphate + NADP(+) = N-acetyl-L-glutamyl 5-phosphate + NADPH + H(+). Its pathway is amino-acid biosynthesis; L-arginine biosynthesis; N(2)-acetyl-L-ornithine from L-glutamate: step 3/4. In terms of biological role, catalyzes the NADPH-dependent reduction of N-acetyl-5-glutamyl phosphate to yield N-acetyl-L-glutamate 5-semialdehyde. The sequence is that of N-acetyl-gamma-glutamyl-phosphate reductase from Shewanella baltica (strain OS223).